A 445-amino-acid chain; its full sequence is Methylenetetrahydrofolate--tRNA-(uracil-5-)-methyltransferase TrmFO (445 aa).

Position 10–15 (Gly10–Gly15) interacts with FAD.

Belongs to the MnmG family. TrmFO subfamily. FAD is required as a cofactor.

It localises to the cytoplasm. It catalyses the reaction uridine(54) in tRNA + (6R)-5,10-methylene-5,6,7,8-tetrahydrofolate + NADH + H(+) = 5-methyluridine(54) in tRNA + (6S)-5,6,7,8-tetrahydrofolate + NAD(+). The enzyme catalyses uridine(54) in tRNA + (6R)-5,10-methylene-5,6,7,8-tetrahydrofolate + NADPH + H(+) = 5-methyluridine(54) in tRNA + (6S)-5,6,7,8-tetrahydrofolate + NADP(+). Catalyzes the folate-dependent formation of 5-methyl-uridine at position 54 (M-5-U54) in all tRNAs. This is Methylenetetrahydrofolate--tRNA-(uracil-5-)-methyltransferase TrmFO from Microcystis aeruginosa (strain NIES-843 / IAM M-2473).